Consider the following 938-residue polypeptide: Protein translocase subunit SecA (938 aa).

ATP contacts are provided by residues glutamine 90, 108 to 112 (GEGKT), and aspartate 504.

Belongs to the SecA family. Monomer and homodimer. Part of the essential Sec protein translocation apparatus which comprises SecA, SecYEG and auxiliary proteins SecDF. Other proteins may also be involved.

It is found in the cell inner membrane. The protein resides in the cellular thylakoid membrane. It localises to the cytoplasm. It carries out the reaction ATP + H2O + cellular proteinSide 1 = ADP + phosphate + cellular proteinSide 2.. In terms of biological role, part of the Sec protein translocase complex. Interacts with the SecYEG preprotein conducting channel. Has a central role in coupling the hydrolysis of ATP to the transfer of proteins into and across the cell membrane, serving as an ATP-driven molecular motor driving the stepwise translocation of polypeptide chains across the membrane. Probably participates in protein translocation into and across both the cytoplasmic and thylakoid membranes in cyanobacterial cells. The protein is Protein translocase subunit SecA of Picosynechococcus sp. (strain ATCC 27264 / PCC 7002 / PR-6) (Agmenellum quadruplicatum).